We begin with the raw amino-acid sequence, 393 residues long: Pyrimidine monooxygenase RutA (393 aa).

Residues 79 to 80, asparagine 145, glutamate 154, 170 to 171, and serine 220 contribute to the FMN site; these read IK and RY.

The protein belongs to the NtaA/SnaA/DszA monooxygenase family. RutA subfamily.

The enzyme catalyses uracil + FMNH2 + NADH + O2 = (Z)-3-ureidoacrylate + FMN + NAD(+) + H2O + H(+). It carries out the reaction thymine + FMNH2 + NADH + O2 = (Z)-2-methylureidoacrylate + FMN + NAD(+) + H2O + H(+). In terms of biological role, catalyzes the pyrimidine ring opening between N-3 and C-4 by an unusual flavin hydroperoxide-catalyzed mechanism, adding oxygen atoms in the process to yield ureidoacrylate peracid, that immediately reacts with FMN forming ureidoacrylate and FMN-N(5)-oxide. The FMN-N(5)-oxide reacts spontaneously with NADH to produce FMN. Requires the flavin reductase RutF to regenerate FMN in vivo. The protein is Pyrimidine monooxygenase RutA of Escherichia coli O18:K1:H7 (strain IHE3034 / ExPEC).